We begin with the raw amino-acid sequence, 374 residues long: DNA replication and repair protein RecF (374 aa).

30 to 37 (GENAQGKT) provides a ligand contact to ATP.

This sequence belongs to the RecF family.

The protein localises to the cytoplasm. Its function is as follows. The RecF protein is involved in DNA metabolism; it is required for DNA replication and normal SOS inducibility. RecF binds preferentially to single-stranded, linear DNA. It also seems to bind ATP. This chain is DNA replication and repair protein RecF, found in Geobacillus sp. (strain WCH70).